The chain runs to 314 residues: tRNA dimethylallyltransferase (314 aa).

Residue 12-19 coordinates ATP; that stretch reads GPTAAGKS. 14 to 19 contributes to the substrate binding site; it reads TAAGKS. Interaction with substrate tRNA stretches follow at residues 37 to 40, 161 to 165, and 245 to 250; these read DSAT, QRIQR, and RCVGYR.

The protein belongs to the IPP transferase family. As to quaternary structure, monomer. The cofactor is Mg(2+).

It catalyses the reaction adenosine(37) in tRNA + dimethylallyl diphosphate = N(6)-dimethylallyladenosine(37) in tRNA + diphosphate. In terms of biological role, catalyzes the transfer of a dimethylallyl group onto the adenine at position 37 in tRNAs that read codons beginning with uridine, leading to the formation of N6-(dimethylallyl)adenosine (i(6)A). The polypeptide is tRNA dimethylallyltransferase (Bordetella petrii (strain ATCC BAA-461 / DSM 12804 / CCUG 43448)).